The primary structure comprises 95 residues: Protein FAM240C (95 aa).

The segment at 68 to 95 (KMLQGPGRCPDRVPEATESLHTKDKKAA) is disordered. The span at 76–95 (CPDRVPEATESLHTKDKKAA) shows a compositional bias: basic and acidic residues.

Belongs to the FAM240 family.

This Homo sapiens (Human) protein is Protein FAM240C (FAM240C).